The following is a 138-amino-acid chain: Regulator of ribonuclease activity B (138 aa).

The tract at residues Tyr114–His138 is disordered. The span at Pro118–His138 shows a compositional bias: acidic residues.

The protein belongs to the RraB family. Interacts with the C-terminal region of Rne.

Its subcellular location is the cytoplasm. Its function is as follows. Globally modulates RNA abundance by binding to RNase E (Rne) and regulating its endonucleolytic activity. Can modulate Rne action in a substrate-dependent manner by altering the composition of the degradosome. The protein is Regulator of ribonuclease activity B of Escherichia coli (strain K12).